The sequence spans 119 residues: Small ribosomal subunit protein bS6 (119 aa).

It belongs to the bacterial ribosomal protein bS6 family.

Its function is as follows. Binds together with bS18 to 16S ribosomal RNA. This is Small ribosomal subunit protein bS6 from Buchnera aphidicola subsp. Baizongia pistaciae (strain Bp).